A 419-amino-acid chain; its full sequence is UDP-N-acetylglucosamine 1-carboxyvinyltransferase (419 aa).

22-23 (KN) serves as a coordination point for phosphoenolpyruvate. R95 is a UDP-N-acetyl-alpha-D-glucosamine binding site. C119 acts as the Proton donor in catalysis. C119 bears the 2-(S-cysteinyl)pyruvic acid O-phosphothioketal mark. UDP-N-acetyl-alpha-D-glucosamine is bound by residues 164-167 (KVSV), D308, and I330.

Belongs to the EPSP synthase family. MurA subfamily.

It localises to the cytoplasm. The catalysed reaction is phosphoenolpyruvate + UDP-N-acetyl-alpha-D-glucosamine = UDP-N-acetyl-3-O-(1-carboxyvinyl)-alpha-D-glucosamine + phosphate. Its pathway is cell wall biogenesis; peptidoglycan biosynthesis. Its function is as follows. Cell wall formation. Adds enolpyruvyl to UDP-N-acetylglucosamine. The polypeptide is UDP-N-acetylglucosamine 1-carboxyvinyltransferase (Rickettsia prowazekii (strain Madrid E)).